Consider the following 194-residue polypeptide: GTP cyclohydrolase 1 (194 aa).

Cysteine 83, histidine 86, and cysteine 155 together coordinate Zn(2+).

Belongs to the GTP cyclohydrolase I family. Homomer.

The catalysed reaction is GTP + H2O = 7,8-dihydroneopterin 3'-triphosphate + formate + H(+). The protein operates within cofactor biosynthesis; 7,8-dihydroneopterin triphosphate biosynthesis; 7,8-dihydroneopterin triphosphate from GTP: step 1/1. The chain is GTP cyclohydrolase 1 from Streptococcus pyogenes serotype M49 (strain NZ131).